We begin with the raw amino-acid sequence, 200 residues long: Glutathione S-transferase domain-containing protein DDB_G0273153/DDB_G0273923 (200 aa).

Positions 1–71 constitute a GST N-terminal domain; the sequence is MISSIYIFKI…YISNNHNFSG (71 aa). The region spanning 73 to 195 is the GST C-terminal domain; sequence SLQESARVDD…INSNNINSQS (123 aa).

It belongs to the GST superfamily.

The polypeptide is Glutathione S-transferase domain-containing protein DDB_G0273153/DDB_G0273923 (Dictyostelium discoideum (Social amoeba)).